The sequence spans 138 residues: Protein FAM136A (138 aa).

N-acetylalanine is present on Ala-2. Thr-124 and Thr-126 each carry phosphothreonine.

This sequence belongs to the FAM136 family.

This chain is Protein FAM136A (FAM136A), found in Bos taurus (Bovine).